Here is a 413-residue protein sequence, read N- to C-terminus: Histidine--tRNA ligase (413 aa).

This sequence belongs to the class-II aminoacyl-tRNA synthetase family. Homodimer.

It localises to the cytoplasm. The catalysed reaction is tRNA(His) + L-histidine + ATP = L-histidyl-tRNA(His) + AMP + diphosphate + H(+). The protein is Histidine--tRNA ligase of Neorickettsia sennetsu (strain ATCC VR-367 / Miyayama) (Ehrlichia sennetsu).